A 618-amino-acid chain; its full sequence is DNA mismatch repair protein MutL (618 aa).

The span at 348-359 (QTDTARSPTGNF) shows a compositional bias: polar residues. The disordered stretch occupies residues 348 to 400 (QTDTARSPTGNFESGEVFDYPKSQLQPSHSVSSGGASLGSRSAGGSGGAYRAT). Residues 377–388 (SVSSGGASLGSR) are compositionally biased toward low complexity.

Belongs to the DNA mismatch repair MutL/HexB family.

Its function is as follows. This protein is involved in the repair of mismatches in DNA. It is required for dam-dependent methyl-directed DNA mismatch repair. May act as a 'molecular matchmaker', a protein that promotes the formation of a stable complex between two or more DNA-binding proteins in an ATP-dependent manner without itself being part of a final effector complex. This chain is DNA mismatch repair protein MutL, found in Pseudoalteromonas translucida (strain TAC 125).